The primary structure comprises 523 residues: BTB/POZ domain-containing protein 3 (523 aa).

Residues 85–114 (FDYSPLVLASLCGHEPVVKFLLENGALCER) form an ANK repeat. BTB domains follow at residues 167–223 (TDIV…RYLY) and 306–373 (HDAY…DIAP).

Interacts with cul3. Ubiquitinated and targeted for cul3-dependent degradation.

The protein resides in the cytoplasm. The protein operates within protein modification; protein ubiquitination. In terms of biological role, probable substrate-specific adapter of an E3 ubiquitin-protein ligase complex which mediates the ubiquitination and subsequent proteasomal degradation of target proteins. This is BTB/POZ domain-containing protein 3 (btb3) from Schizosaccharomyces pombe (strain 972 / ATCC 24843) (Fission yeast).